We begin with the raw amino-acid sequence, 45 residues long: Iota-conotoxin-like R11.12 (45 aa).

Intrachain disulfides connect Cys-5/Cys-19, Cys-12/Cys-22, Cys-18/Cys-27, and Cys-21/Cys-36. Leu-43 carries the D-leucine modification. Residue Arg-45 is a propeptide, removed by a carboxypeptidase.

This sequence belongs to the conotoxin I1 superfamily. As to expression, expressed by the venom duct.

The protein resides in the secreted. Its function is as follows. Iota-conotoxins bind to voltage-gated sodium channels (Nav) and act as agonists by shifting the voltage-dependence of activation to more hyperpolarized levels. Produces general excitatory symptoms. This is Iota-conotoxin-like R11.12 from Conus radiatus (Rayed cone).